The chain runs to 295 residues: Ventral anterior homeobox 1a (295 aa).

Over residues 20–33 the composition is skewed to basic and acidic residues; it reads ISKPKDNKEIRETQ. Residues 20-63 form a disordered region; that stretch reads ISKPKDNKEIRETQAKMPSTYLKEQPGTYPAPGSSELCAKNKSS. Residues 97 to 156 constitute a DNA-binding region (homeobox); that stretch reads PKRSRTSFTAEQLYRLEMEFQRCQYVVGRERTDLSRQLNLSETQVKVWFQNRRTKQKKDQ. The interval 203–226 is disordered; sequence RAPNSSGPGTRSLATVTSTPPHQP. Positions 204–222 are enriched in polar residues; the sequence is APNSSGPGTRSLATVTSTP.

Belongs to the EMX homeobox family.

It is found in the nucleus. In terms of biological role, may play a role in the specification and maintenance of basal forebrain identity. The protein is Ventral anterior homeobox 1a (vax1-a) of Xenopus laevis (African clawed frog).